The primary structure comprises 387 residues: GDP-mannose transporter (387 aa).

Basic and acidic residues predominate over residues 1–25 (MADTKKNDNYAIDMDKLDAESDRFR). Residues 1–42 (MADTKKNDNYAIDMDKLDAESDRFRPPPQPQPRHSSSSHSQS) lie on the Cytoplasmic side of the membrane. The segment at 1-45 (MADTKKNDNYAIDMDKLDAESDRFRPPPQPQPRHSSSSHSQSISN) is disordered. A compositionally biased stretch (low complexity) spans 32 to 45 (PRHSSSSHSQSISN). Residues 43-63 (ISNSPVLPILSYCASSILMTV) traverse the membrane as a helical segment. The Lumenal portion of the chain corresponds to 64 to 71 (TNKYVLSG). The chain crosses the membrane as a helical span at residues 72–92 (VQFNLNFFLLCVQSVVCIIAI). Residues 93–112 (QTCKSMGLINYRDFNSDEAK) are Cytoplasmic-facing. A helical transmembrane segment spans residues 113 to 129 (KWFPISLLLIGMIYTGT). Residues 130-136 (KALKFLS) are Lumenal-facing. A helical membrane pass occupies residues 137–153 (IPVYTIFKNLTIILIAY). Residues 154 to 162 (GEVLWFGGS) are Cytoplasmic-facing. Residues 163–184 (VTGMALFSFGLMVLSSVIAAWA) form a helical membrane-spanning segment. At 185-206 (DIKHALDTSGFSGAEATSKIST) the chain is on the lumenal side. Residues 207–227 (LNAGYIWMLINCLCTSTYILG) form a helical membrane-spanning segment. Residues 228–241 (MRKRIKLTNFKDFD) are Cytoplasmic-facing. A helical transmembrane segment spans residues 242-262 (TMFYNNLLSIPILMIGSFIVE). Over 263–280 (DWSSENINKNFPIETRNS) the chain is Lumenal. The chain crosses the membrane as a helical span at residues 281 to 301 (LIFAMIFSGLSSVFISYTSAW). Topologically, residues 302 to 309 (CVRVTSST) are cytoplasmic. A helical membrane pass occupies residues 310–329 (TYSMVGALNKLPIALSGLIF). Topologically, residues 330–332 (FGD) are lumenal. A helical transmembrane segment spans residues 333-355 (PVTVPSVSAIVVGFISGIVYSLA). Over 356 to 387 (KVKQNAKPRTGVLPTTNPVSASTQSMRDGLKS) the chain is Cytoplasmic. The segment at 366–387 (GVLPTTNPVSASTQSMRDGLKS) is disordered. The span at 368–381 (LPTTNPVSASTQSM) shows a compositional bias: polar residues.

Belongs to the TPT transporter family. SLC35D subfamily. As to quaternary structure, homooligomer.

The protein localises to the golgi apparatus membrane. It localises to the cytoplasmic vesicle membrane. The protein resides in the endoplasmic reticulum membrane. Functionally, involved in the import of GDP-mannose from the cytoplasm into the Golgi lumen. In Coccidioides immitis (strain RS) (Valley fever fungus), this protein is GDP-mannose transporter (VRG4).